A 121-amino-acid polypeptide reads, in one-letter code: Ribonuclease P protein component (121 aa).

The protein belongs to the RnpA family. Consists of a catalytic RNA component (M1 or rnpB) and a protein subunit.

The catalysed reaction is Endonucleolytic cleavage of RNA, removing 5'-extranucleotides from tRNA precursor.. Functionally, RNaseP catalyzes the removal of the 5'-leader sequence from pre-tRNA to produce the mature 5'-terminus. It can also cleave other RNA substrates such as 4.5S RNA. The protein component plays an auxiliary but essential role in vivo by binding to the 5'-leader sequence and broadening the substrate specificity of the ribozyme. The sequence is that of Ribonuclease P protein component from Geobacillus thermodenitrificans (strain NG80-2).